Reading from the N-terminus, the 278-residue chain is MITGRTALYGVVGHPVAHSRSPEMQNAAFARLGVDAVYVALPVAPERIDEALRGAHALGFQGLNVTVPHKPRAASLCHALDPVATAVGAANTLRRTRDGWDGFNTDAPACRTLLEAAGVVRGSRALLVGAGGAARAAAWALVQLGTEVRVAARREEAAAELCRDLAAAVPGADLAAADFEDLEAEADAAAVVVNGTSVGLPGHEGRLPPLRFRAAQVVLDFVYGDTELARAARAAGARLVSGEQVLVRQGALAFTIWTGQPAPEADMARALEAREGAR.

Shikimate contacts are provided by residues 19-21 (SRS) and T66. K70 acts as the Proton acceptor in catalysis. Residues N91 and D106 each contribute to the shikimate site. NADP(+)-binding positions include 129-133 (GAGGA) and F221. Y223 is a shikimate binding site. Residue G242 participates in NADP(+) binding.

The protein belongs to the shikimate dehydrogenase family. Homodimer.

It carries out the reaction shikimate + NADP(+) = 3-dehydroshikimate + NADPH + H(+). It functions in the pathway metabolic intermediate biosynthesis; chorismate biosynthesis; chorismate from D-erythrose 4-phosphate and phosphoenolpyruvate: step 4/7. Involved in the biosynthesis of the chorismate, which leads to the biosynthesis of aromatic amino acids. Catalyzes the reversible NADPH linked reduction of 3-dehydroshikimate (DHSA) to yield shikimate (SA). The polypeptide is Shikimate dehydrogenase (NADP(+)) (Anaeromyxobacter dehalogenans (strain 2CP-1 / ATCC BAA-258)).